A 462-amino-acid polypeptide reads, in one-letter code: Exodeoxyribonuclease 7 large subunit (462 aa).

This sequence belongs to the XseA family. In terms of assembly, heterooligomer composed of large and small subunits.

The protein localises to the cytoplasm. The catalysed reaction is Exonucleolytic cleavage in either 5'- to 3'- or 3'- to 5'-direction to yield nucleoside 5'-phosphates.. In terms of biological role, bidirectionally degrades single-stranded DNA into large acid-insoluble oligonucleotides, which are then degraded further into small acid-soluble oligonucleotides. The chain is Exodeoxyribonuclease 7 large subunit from Proteus mirabilis (strain HI4320).